A 398-amino-acid polypeptide reads, in one-letter code: E3 ubiquitin-protein ligase MARCHF11 (398 aa).

The segment covering 1–14 has biased composition (basic and acidic residues); sequence MSDEGSKRGSRADS. Residues 1 to 158 form a disordered region; the sequence is MSDEGSKRGS…GSGDQRSGHQ (158 aa). Over residues 19–31 the composition is skewed to pro residues; the sequence is PPLPPPPPPPPPG. Basic and acidic residues-rich tracts occupy residues 94-104 and 121-130; these read EGPRRLPEVKL and ACREGERRGT. The RING-CH-type zinc finger occupies 158 to 218; sequence QHQHHQPICK…ELCCYRYHVT (61 aa). 8 residues coordinate Zn(2+): C166, C169, C182, C184, H192, C195, C208, and C211. Helical transmembrane passes span 241-261 and 274-294; these read MIAV…LLWS and ILFQ…IGLI. The YXXL motif signature appears at 367 to 370; sequence YVLL. Positions 395–398 match the PDZ-binding motif; it reads VTSV.

In terms of assembly, interacts (YXXL motif) with AP1M1. Interacts (via PDZ-binding motif) with LIN7A. Interacts with unidentified fucose glycoproteins. As to expression, predominantly expressed in testis. Present in early developing spermatids. Not present in spermatogonia, spermatocytes or somatic cells (i.e. peritubular, Leydig, and Sertoli cells). Present in early round spermatids at step 4, remains until step 11, then it decreases at steps 12-15, and diminishes after step 16 (at protein level). Also expressed at lower level in brain.

The protein resides in the cytoplasmic vesicle membrane. It catalyses the reaction S-ubiquitinyl-[E2 ubiquitin-conjugating enzyme]-L-cysteine + [acceptor protein]-L-lysine = [E2 ubiquitin-conjugating enzyme]-L-cysteine + N(6)-ubiquitinyl-[acceptor protein]-L-lysine.. It functions in the pathway protein modification; protein ubiquitination. E3 ubiquitin-protein ligase that mediates polyubiquitination of CD4. E3 ubiquitin ligases accept ubiquitin from an E2 ubiquitin-conjugating enzyme in the form of a thioester and then directly transfer the ubiquitin to targeted substrates. May play a role in ubuquitin-dependent protein sorting in developmenting spermatids. The chain is E3 ubiquitin-protein ligase MARCHF11 (Marchf11) from Rattus norvegicus (Rat).